The sequence spans 1911 residues: Adenylate kinase 9 (1911 aa).

Positions 31-285 (VCFVVFGKPG…LFMIVMDRLK (255 aa)) are adenylate kinase 1. 40–45 (GVGKTT) is an ATP binding site. The interval 60-89 (EALPILEEQIAAETESGVMLQSMLISGQSI) is NMP 1. AMP-binding positions include 87–89 (QSI) and 116–119 (EIPS). The interval 160–205 (GQRQHNNTGYIYSRDQWDPEVIENHRKKKKEAQKDGKGEEEEEEEE) is LID 1. Residues 185–210 (RKKKKEAQKDGKGEEEEEEEEQEEEE) form a disordered region. Acidic residues predominate over residues 197–210 (GEEEEEEEEQEEEE). Residue Arg-229 participates in AMP binding. Coiled coils occupy residues 443-485 (AEAT…EFGV) and 676-711 (LQKK…TEEE). Disordered stretches follow at residues 728–796 (KAKE…TEIP) and 892–926 (DYEE…KERK). Residues 733–750 (EETDNEDEEEIEGDELEV) are compositionally biased toward acidic residues. The span at 751-761 (HEEPEASHDTR) shows a compositional bias: basic and acidic residues. 2 stretches are compositionally biased toward acidic residues: residues 767–791 (EEFE…ETTV) and 892–919 (DYEE…EEGE). 2 adenylate kinase regions span residues 992–1203 (LRIC…ELIL) and 1412–1601 (IRII…KNVQ). 1001–1006 (GSGKTM) contacts ATP. The tract at residues 1021-1052 (QFEEVLQEKLLLKTEKKVGPEFEEDSENEQAA) is NMP 2. AMP-binding positions include 1050–1052 (QAA) and 1079–1082 (VQLT). Residues 1124-1144 (DGFPRYPEEAQFLGDRGFFPD) are LID 2. ATP is bound at residue 1421–1426 (KSGKTT). Residues 1441 to 1472 (SIGGALRYVLNNHPETELALMLNWHLHKGMTA) are NMP 3. Residues Arg-1447, 1470-1472 (MTA), 1499-1502 (GYPV), Gln-1506, and Arg-1543 each bind AMP. An LID 3 region spans residues 1536–1550 (LEKENEQRLPYPLHN).

This sequence belongs to the adenylate kinase family.

The protein resides in the cytoplasm. Its subcellular location is the nucleus. The protein localises to the cell projection. It is found in the cilium. It localises to the flagellum. It catalyses the reaction a ribonucleoside 5'-phosphate + ATP = a ribonucleoside 5'-diphosphate + ADP. The catalysed reaction is AMP + ATP = 2 ADP. It carries out the reaction GTP + AMP = GDP + ADP. The enzyme catalyses CMP + ATP = CDP + ADP. It catalyses the reaction GTP + CMP = CDP + GDP. The catalysed reaction is dAMP + ATP = dADP + ADP. It carries out the reaction dCMP + ATP = dCDP + ADP. The enzyme catalyses a ribonucleoside 5'-diphosphate + ATP = a ribonucleoside 5'-triphosphate + ADP. It catalyses the reaction CDP + ATP = CTP + ADP. The catalysed reaction is CDP + GTP = CTP + GDP. It carries out the reaction GDP + ATP = GTP + ADP. The enzyme catalyses UDP + ATP = UTP + ADP. It catalyses the reaction GTP + UDP = UTP + GDP. The catalysed reaction is dTDP + GTP = dTTP + GDP. It carries out the reaction dCDP + ATP = dCTP + ADP. The enzyme catalyses dCDP + GTP = dCTP + GDP. It catalyses the reaction dGDP + ATP = dGTP + ADP. The catalysed reaction is dTDP + ATP = dTTP + ADP. It carries out the reaction dADP + GTP = dATP + GDP. Its function is as follows. Broad-specificity nucleoside phosphate kinase involved in cellular nucleotide homeostasis by catalyzing nucleoside-phosphate interconversions. Similar to other adenylate kinases, preferentially catalyzes the phosphorylation of the nucleoside monophosphate AMP with ATP as phosphate donor to produce ADP. In vitro, can also catalyze the phosphorylation of CMP, dAMP and dCMP and use GTP as an alternate phosphate donor. Moreover, exhibits a diphosphate kinase activity, producing ATP, CTP, GTP, UTP, TTP, dATP, dCTP and dGTP from the corresponding diphosphate substrates with either ATP or GTP as phosphate donors. For this activity shows the following substrate preference CDP &gt; UDP &gt; ADP &gt; TDP. In Homo sapiens (Human), this protein is Adenylate kinase 9.